Reading from the N-terminus, the 354-residue chain is Homer protein homolog 2 (354 aa).

A WH1 domain is found at 1-110 (MGEQPIFTTR…EKFQEVREAA (110 aa)). The stretch at 92 to 120 (SEQQLTKFAEKFQEVREAARLARDKSQEK) forms a coiled coil. The disordered stretch occupies residues 114-163 (RDKSQEKIETSSNHSQESGCETPSSTQASSVNGTDDEKASHASPADTHLK). Positions 123–146 (TSSNHSQESGCETPSSTQASSVNG) are enriched in polar residues. Residues 160–329 (THLKSENDKL…RHLKGELKSF (170 aa)) adopt a coiled-coil conformation.

Belongs to the Homer family. Isoform 1 and isoform 2 encode coiled-coil structures that mediate homo- and heteromultimerization. Interacts with NFATC2; interaction is reduced by AKT activation. Interacts with NFATC1 and NFATC4. Interacts with DAGLA (via PPXXF motif); this interaction is required for the cell membrane localization of DAGLA. In terms of tissue distribution, constitutively expressed in the adult hippocampus.

The protein localises to the cytoplasm. It is found in the cell membrane. Its subcellular location is the postsynaptic density. The protein resides in the synapse. It localises to the cell projection. The protein localises to the stereocilium. In terms of biological role, postsynaptic density scaffolding protein. Binds and cross-links cytoplasmic regions of GRM1, GRM5, ITPR1, DNM3, RYR1, RYR2, SHANK1 and SHANK3. By physically linking GRM1 and GRM5 with ER-associated ITPR1 receptors, it aids the coupling of surface receptors to intracellular calcium release. May also couple GRM1 to PI3 kinase through its interaction with AGAP2. Isoforms can be differently regulated and may play an important role in maintaining the plasticity at glutamatergic synapses. Required for normal hearing. Negatively regulates T cell activation by inhibiting the calcineurin-NFAT pathway. Acts by competing with calcineurin/PPP3CA for NFAT protein binding, hence preventing NFAT activation by PPP3CA. The chain is Homer protein homolog 2 from Rattus norvegicus (Rat).